The primary structure comprises 245 residues: Leucyl/phenylalanyl-tRNA--protein transferase (245 aa).

Belongs to the L/F-transferase family.

Its subcellular location is the cytoplasm. The enzyme catalyses N-terminal L-lysyl-[protein] + L-leucyl-tRNA(Leu) = N-terminal L-leucyl-L-lysyl-[protein] + tRNA(Leu) + H(+). It catalyses the reaction N-terminal L-arginyl-[protein] + L-leucyl-tRNA(Leu) = N-terminal L-leucyl-L-arginyl-[protein] + tRNA(Leu) + H(+). It carries out the reaction L-phenylalanyl-tRNA(Phe) + an N-terminal L-alpha-aminoacyl-[protein] = an N-terminal L-phenylalanyl-L-alpha-aminoacyl-[protein] + tRNA(Phe). In terms of biological role, functions in the N-end rule pathway of protein degradation where it conjugates Leu, Phe and, less efficiently, Met from aminoacyl-tRNAs to the N-termini of proteins containing an N-terminal arginine or lysine. In Paraburkholderia phytofirmans (strain DSM 17436 / LMG 22146 / PsJN) (Burkholderia phytofirmans), this protein is Leucyl/phenylalanyl-tRNA--protein transferase.